We begin with the raw amino-acid sequence, 31 residues long: Cytochrome b6-f complex subunit 6 (31 aa).

The chain crosses the membrane as a helical span at residues 3 to 23; that stretch reads VAIDYFLLVGFCFAVTSGLWI.

This sequence belongs to the PetL family. In terms of assembly, the 4 large subunits of the cytochrome b6-f complex are cytochrome b6, subunit IV (17 kDa polypeptide, PetD), cytochrome f and the Rieske protein, while the 4 small subunits are PetG, PetL, PetM and PetN. The complex functions as a dimer.

Its subcellular location is the plastid. It localises to the chloroplast thylakoid membrane. In terms of biological role, component of the cytochrome b6-f complex, which mediates electron transfer between photosystem II (PSII) and photosystem I (PSI), cyclic electron flow around PSI, and state transitions. PetL is important for photoautotrophic growth as well as for electron transfer efficiency and stability of the cytochrome b6-f complex. This Phaeodactylum tricornutum (strain CCAP 1055/1) protein is Cytochrome b6-f complex subunit 6.